Consider the following 547-residue polypeptide: MAAKEVKFGREARERLLRGVDILANAVKVTLGPKGRNVVIDKSFGAPRITKDGVSVAKEIELEDKFENMGAQMLREVASKTNDIAGDGTTTATVLGQAIVQEGVKAVAAGMNPMDLKRGIDAAVDEVVANLFKKAKKIQTSAEIAQVGTISANGAAEIGKMIADAMEKVGNEGVITVEEAKTAETELEVVEGMQFDRGYLSPYFVTNAEKMVADLDDPYILIHEKKLSNLQSLLPVLEAVVQSGKPLLIIAEDVEGEALATLVVNKLRGGLKIAAVKAPGFGDRRKAMLEDIAILTSGQVISEDVGIKLENVTLDMLGRAKKVNISKENTTIIDGAGQKSEINARVNQIKVQIEETTSDYDREKLQERLAKLAGGVAVIRVGGATEVEVKEKKDRVDDALNATRAAVEEGIVAGGGTALLRAANALTVKGSNPDQEAGINIVRRALQAPARQIATNAGEEAAIIVGKVLENNADTFGYNTATGEFGDLIALGIVDPVKVVRSALQNAASIASLLITTEAMVAEVPKKDTPVPPMPGGGMGGMGGMDF.

Residues 30-33 (TLGP), Lys51, 87-91 (DGTTT), Gly415, and Asp495 each bind ATP. The tract at residues 526–547 (KKDTPVPPMPGGGMGGMGGMDF) is disordered. Positions 536 to 547 (GGGMGGMGGMDF) are enriched in gly residues.

The protein belongs to the chaperonin (HSP60) family. In terms of assembly, forms a cylinder of 14 subunits composed of two heptameric rings stacked back-to-back. Interacts with the co-chaperonin GroES.

It localises to the cytoplasm. The enzyme catalyses ATP + H2O + a folded polypeptide = ADP + phosphate + an unfolded polypeptide.. In terms of biological role, together with its co-chaperonin GroES, plays an essential role in assisting protein folding. The GroEL-GroES system forms a nano-cage that allows encapsulation of the non-native substrate proteins and provides a physical environment optimized to promote and accelerate protein folding. The protein is Chaperonin GroEL of Bartonella henselae (strain ATCC 49882 / DSM 28221 / CCUG 30454 / Houston 1) (Rochalimaea henselae).